The primary structure comprises 139 residues: Peptide methionine sulfoxide reductase B5 (139 aa).

Position 2 is an N-acetylalanine (Ala-2). One can recognise a MsrB domain in the interval 12-133 (EEEWRAVLSP…NSVSISFNPA (122 aa)). Cys-51, Cys-54, Cys-97, and Cys-100 together coordinate Zn(2+). An intrachain disulfide couples Cys-69 to Cys-122. Cys-122 functions as the Nucleophile in the catalytic mechanism.

This sequence belongs to the MsrB Met sulfoxide reductase family. Zn(2+) serves as cofactor.

It localises to the cytoplasm. The protein resides in the cytosol. The enzyme catalyses L-methionyl-[protein] + [thioredoxin]-disulfide + H2O = L-methionyl-(R)-S-oxide-[protein] + [thioredoxin]-dithiol. Its function is as follows. Catalyzes the reduction of methionine sulfoxide (MetSO) to methionine in proteins. Plays a protective role against oxidative stress by restoring activity to proteins that have been inactivated by methionine oxidation. MSRB family specifically reduces the MetSO R-enantiomer. The polypeptide is Peptide methionine sulfoxide reductase B5 (MSRB5) (Arabidopsis thaliana (Mouse-ear cress)).